A 247-amino-acid polypeptide reads, in one-letter code: Large ribosomal subunit protein uL3 (247 aa).

Disordered stretches follow at residues 140–164 (SHRSIGSTGGRQDPGKTFKNKKMPG) and 212–247 (LPKEAPKPGKFKVVGDAQAVDEDKAPADTPAEKEGA). Gln151 is subject to N5-methylglutamine. Positions 232–247 (DEDKAPADTPAEKEGA) are enriched in basic and acidic residues.

It belongs to the universal ribosomal protein uL3 family. In terms of assembly, part of the 50S ribosomal subunit. Forms a cluster with proteins L14 and L19. Methylated by PrmB.

Its function is as follows. One of the primary rRNA binding proteins, it binds directly near the 3'-end of the 23S rRNA, where it nucleates assembly of the 50S subunit. The sequence is that of Large ribosomal subunit protein uL3 from Nitrobacter winogradskyi (strain ATCC 25391 / DSM 10237 / CIP 104748 / NCIMB 11846 / Nb-255).